Consider the following 754-residue polypeptide: Catalase-peroxidase (754 aa).

Positions 1-29 (MGTQPARKLRNRVFPHPHNHRKEKPMAND) are disordered. Positions 7-23 (RKLRNRVFPHPHNHRKE) are enriched in basic residues. The active-site Tryptophan radical intermediate is the W106. The segment at residues 122–249 (WHAAGTYRIA…LAAVQMGLIY (128 aa)) is a cross-link (tryptophyl-tyrosyl-methioninium (Trp-Tyr) (with M-275)). H123 (proton acceptor) is an active-site residue. Residues 249-275 (YVNPEGVDGHPDPLCTAQDVRTTFARM) constitute a cross-link (tryptophyl-tyrosyl-methioninium (Tyr-Met) (with W-122)). A heme b-binding site is contributed by H290.

It belongs to the peroxidase family. Peroxidase/catalase subfamily. Homodimer. Requires heme b as cofactor. Formation of the three residue Trp-Tyr-Met cross-link is important for the catalase, but not the peroxidase activity of the enzyme.

It catalyses the reaction H2O2 + AH2 = A + 2 H2O. It carries out the reaction 2 H2O2 = O2 + 2 H2O. Functionally, bifunctional enzyme with both catalase and broad-spectrum peroxidase activity. Also displays NADH oxidase, isoniazid hydrazine lyase and isonicotinoyl-NAD synthase activities. This is Catalase-peroxidase from Synechocystis sp. (strain ATCC 27184 / PCC 6803 / Kazusa).